Reading from the N-terminus, the 328-residue chain is Tetraacyldisaccharide 4'-kinase (328 aa).

55-62 (TAGGNGKT) is a binding site for ATP.

Belongs to the LpxK family.

The catalysed reaction is a lipid A disaccharide + ATP = a lipid IVA + ADP + H(+). It participates in glycolipid biosynthesis; lipid IV(A) biosynthesis; lipid IV(A) from (3R)-3-hydroxytetradecanoyl-[acyl-carrier-protein] and UDP-N-acetyl-alpha-D-glucosamine: step 6/6. Its function is as follows. Transfers the gamma-phosphate of ATP to the 4'-position of a tetraacyldisaccharide 1-phosphate intermediate (termed DS-1-P) to form tetraacyldisaccharide 1,4'-bis-phosphate (lipid IVA). This Shigella dysenteriae serotype 1 (strain Sd197) protein is Tetraacyldisaccharide 4'-kinase.